Here is a 100-residue protein sequence, read N- to C-terminus: Small ribosomal subunit protein uS14m (100 aa).

The protein belongs to the universal ribosomal protein uS14 family.

The protein resides in the mitochondrion. This Vicia faba (Broad bean) protein is Small ribosomal subunit protein uS14m (RPS14).